A 468-amino-acid chain; its full sequence is ERO1-like protein alpha (468 aa).

The first 23 residues, 1–23 (MGRGWGFLFGLLGAVWLLSSGHG), serve as a signal peptide directing secretion. 8 cysteine pairs are disulfide-bonded: Cys-35/Cys-48, Cys-37/Cys-46, Cys-85/Cys-391, Cys-94/Cys-99, Cys-94/Cys-131, Cys-99/Cys-104, Cys-208/Cys-241, and Cys-394/Cys-397. 2 positions are modified to phosphoserine: Ser-106 and Ser-143. Ser-145 bears the Phosphoserine; by FAM20C mark. FAD contacts are provided by Arg-187, Thr-189, and Trp-200. Positions 252 and 255 each coordinate FAD. N-linked (GlcNAc...) asparagine glycosylation occurs at Asn-280. FAD contacts are provided by Arg-287 and Arg-300. The N-linked (GlcNAc...) asparagine glycan is linked to Asn-384.

It belongs to the EROs family. Predominantly monomer. May function both as a monomer and a homodimer. Interacts with PDILT. Interacts with ERP44; the interaction results in retention of ERO1A in the endoplasmic reticulum. The cofactor is FAD. Post-translationally, N-glycosylated. In terms of processing, the Cys-94/Cys-99 and Cys-394/Cys-397 disulfide bonds constitute the redox-active center. The Cys-94/Cys-99 disulfide bond may accept electron from P4HB and funnel them to the active site disulfide Cys-394/Cys-397. The regulatory Cys-99/Cys-104 disulfide bond stabilizes the other regulatory bond Cys-94/Cys-131. Phosphorylated on Ser-145 by FAM20C in the Golgi which increases its enzymatic activity. Phosphorylation is induced by lactation. It is also induced by hypoxia and reductive stress. Widely expressed at low level. Expressed at high level in upper digestive tract. Highly expressed in esophagus. Weakly expressed in stomach and duodenum.

Its subcellular location is the endoplasmic reticulum membrane. The protein localises to the golgi apparatus lumen. The protein resides in the secreted. It localises to the cell projection. It is found in the dendrite. Its activity is regulated as follows. Enzyme activity is tightly regulated to prevent the accumulation of reactive oxygen species in the endoplasmic reticulum. Reversibly down-regulated by the formation of disulfide bonds between the active site Cys-94 and Cys-131, and between Cys-99 and Cys-104. Glutathione may be required to regulate its activity in the endoplasmic reticulum. Its function is as follows. Oxidoreductase involved in disulfide bond formation in the endoplasmic reticulum. Efficiently reoxidizes P4HB/PDI, the enzyme catalyzing protein disulfide formation, in order to allow P4HB to sustain additional rounds of disulfide formation. Following P4HB reoxidation, passes its electrons to molecular oxygen via FAD, leading to the production of reactive oxygen species (ROS) in the cell. Required for the proper folding of immunoglobulins. Plays an important role in ER stress-induced, CHOP-dependent apoptosis by activating the inositol 1,4,5-trisphosphate receptor IP3R1. Involved in the release of the unfolded cholera toxin from reduced P4HB/PDI in case of infection by V.cholerae, thereby playing a role in retrotranslocation of the toxin. The polypeptide is ERO1-like protein alpha (Homo sapiens (Human)).